The chain runs to 413 residues: Tubby-like F-box protein 6 (413 aa).

Residues 67 to 122 enclose the F-box domain; sequence SIWVDLPPELLLDIIQRIESEQSLWPGRRDVVACASVCKSWREMTKEVVKVPELSG.

Belongs to the TUB family. In terms of tissue distribution, ubiquitous, with higher levels in flowers.

This chain is Tubby-like F-box protein 6, found in Arabidopsis thaliana (Mouse-ear cress).